The primary structure comprises 360 residues: DNA replication and repair protein RecF (360 aa).

Residue 33–40 (GENGSGKT) coordinates ATP.

It belongs to the RecF family.

Its subcellular location is the cytoplasm. Its function is as follows. The RecF protein is involved in DNA metabolism; it is required for DNA replication and normal SOS inducibility. RecF binds preferentially to single-stranded, linear DNA. It also seems to bind ATP. The protein is DNA replication and repair protein RecF of Rickettsia canadensis (strain McKiel).